A 301-amino-acid polypeptide reads, in one-letter code: uncharacterized protein (301 aa).

3 residues coordinate a divalent metal cation: glutamate 146, glutamate 148, and aspartate 177.

Belongs to the FAH family.

This is an uncharacterized protein from Staphylococcus haemolyticus (strain JCSC1435).